A 497-amino-acid chain; its full sequence is Di-/tripeptide transporter (497 aa).

Residues 1–36 lie on the Cytoplasmic side of the membrane; sequence MQNLNKTEKTFFGQPRGLLTLFQTEFWERFSYYGMR. A helical membrane pass occupies residues 37–55; the sequence is AILVYYLYALTTADNAGLG. Residues 56–64 lie on the Extracellular side of the membrane; the sequence is LPKAQAMAI. Residues 65–83 traverse the membrane as a helical segment; sequence VSIYGALVYLSTIVGGWVA. Topologically, residues 84–92 are cytoplasmic; it reads DRLLGASRT. The helical transmembrane segment at 93 to 111 threads the bilayer; it reads IFLGGILITLGHVALATPF. Residues 112 to 115 lie on the Extracellular side of the membrane; the sequence is GLSS. A helical membrane pass occupies residues 116-134; that stretch reads LFVALFLIILGTGMLKPNI. Topologically, residues 135 to 154 are cytoplasmic; sequence SNMVGHLYSKDDSRRDTGFN. A helical transmembrane segment spans residues 155-173; that stretch reads IFVVGINMGSLIAPLIVGT. Topologically, residues 174–181 are extracellular; it reads VGQGVNYH. The chain crosses the membrane as a helical span at residues 182–200; the sequence is LGFSLAAIGMIFALFAYWY. The Cytoplasmic segment spans residues 201–224; that stretch reads GRLRHFPEIGREPSNPMDAKAKRN. The helical transmembrane segment at 225 to 243 threads the bilayer; that stretch reads FIITLTIVLIVALIGFFLI. The Extracellular portion of the chain corresponds to 244-254; that stretch reads YQASPANFINN. The chain crosses the membrane as a helical span at residues 255 to 273; sequence FINVLSIIGIVVPIIYFVM. Residues 274 to 293 are Cytoplasmic-facing; sequence MFTSKKVESDERRKLTAYIP. A helical transmembrane segment spans residues 294–312; the sequence is LFLSAIVFWAIEEQSSTII. The Extracellular segment spans residues 313–335; the sequence is AVWGESRSNLNPTWFGFTFHIDP. A helical membrane pass occupies residues 336-354; sequence SWYQLLNPLFIVLLSPIFV. Residues 355-372 lie on the Cytoplasmic side of the membrane; it reads RIWNKLGDRQPSTIVKFG. A helical transmembrane segment spans residues 373 to 391; that stretch reads LGLMLTGASYLIMTLPGLL. Over 392 to 425 the chain is Extracellular; sequence NGTSGRASALWLVLMFAVQMAGELLVSPVGLSVS. Residues 426-444 form a helical membrane-spanning segment; the sequence is TKLAPVAFQSQMMAMWFLA. The Cytoplasmic segment spans residues 445–497; the sequence is DSTSQAINAQITPIFKAATEVHFFAITGIIGIIVGIILLIIKKPILKLMGDVR.

Belongs to the major facilitator superfamily. Proton-dependent oligopeptide transporter (POT/PTR) (TC 2.A.17) family.

It localises to the cell membrane. In terms of biological role, proton-dependent uptake of di- or tri-peptides. The chain is Di-/tripeptide transporter (dtpT) from Lactococcus lactis subsp. cremoris (Streptococcus cremoris).